The primary structure comprises 149 residues: Large ribosomal subunit protein bL20m (149 aa).

The transit peptide at 1–9 (MVFLTTRLW) directs the protein to the mitochondrion.

Belongs to the bacterial ribosomal protein bL20 family. Component of the mitochondrial ribosome large subunit (39S) which comprises a 16S rRNA and about 50 distinct proteins. Interacts with OXA1L.

It localises to the mitochondrion. The sequence is that of Large ribosomal subunit protein bL20m (Mrpl20) from Mus musculus (Mouse).